The chain runs to 223 residues: Small ribosomal subunit protein uS3 (223 aa).

Residues 39 to 108 (IRNFVKKNSY…NILINIVEVK (70 aa)) form the KH type-2 domain.

The protein belongs to the universal ribosomal protein uS3 family. Part of the 30S ribosomal subunit. Forms a tight complex with proteins S10 and S14.

Functionally, binds the lower part of the 30S subunit head. Binds mRNA in the 70S ribosome, positioning it for translation. The polypeptide is Small ribosomal subunit protein uS3 (Clostridium botulinum (strain Hall / ATCC 3502 / NCTC 13319 / Type A)).